The following is a 270-amino-acid chain: NAD kinase (270 aa).

The active-site Proton acceptor is the D57. NAD(+)-binding positions include 57-58 (DG), 125-126 (NE), R150, and N227.

This sequence belongs to the NAD kinase family. Requires a divalent metal cation as cofactor.

Its subcellular location is the cytoplasm. The catalysed reaction is NAD(+) + ATP = ADP + NADP(+) + H(+). Its function is as follows. Involved in the regulation of the intracellular balance of NAD and NADP, and is a key enzyme in the biosynthesis of NADP. Catalyzes specifically the phosphorylation on 2'-hydroxyl of the adenosine moiety of NAD to yield NADP. This chain is NAD kinase, found in Ureaplasma parvum serovar 3 (strain ATCC 700970).